The chain runs to 204 residues: Guanylate kinase (204 aa).

The 179-residue stretch at 4–182 (GMLVVVSGPS…AVNDLEAVLT (179 aa)) folds into the Guanylate kinase-like domain. An ATP-binding site is contributed by 11–18 (GPSGAGKG).

Belongs to the guanylate kinase family.

Its subcellular location is the cytoplasm. The catalysed reaction is GMP + ATP = GDP + ADP. In terms of biological role, essential for recycling GMP and indirectly, cGMP. The polypeptide is Guanylate kinase (Carboxydothermus hydrogenoformans (strain ATCC BAA-161 / DSM 6008 / Z-2901)).